A 240-amino-acid polypeptide reads, in one-letter code: Uridylate kinase (240 aa).

Residue 14–17 (KLSG) participates in ATP binding. Residue G56 participates in UMP binding. 2 residues coordinate ATP: G57 and R61. UMP is bound by residues D76 and 137–144 (TGNPFFTT). Residues T164, Y170, and D173 each coordinate ATP.

Belongs to the UMP kinase family. In terms of assembly, homohexamer.

The protein resides in the cytoplasm. It carries out the reaction UMP + ATP = UDP + ADP. It participates in pyrimidine metabolism; CTP biosynthesis via de novo pathway; UDP from UMP (UMPK route): step 1/1. With respect to regulation, inhibited by UTP. Catalyzes the reversible phosphorylation of UMP to UDP. This chain is Uridylate kinase, found in Paracidovorax citrulli (strain AAC00-1) (Acidovorax citrulli).